Here is a 184-residue protein sequence, read N- to C-terminus: ATP synthase subunit delta (184 aa).

It belongs to the ATPase delta chain family. In terms of assembly, F-type ATPases have 2 components, F(1) - the catalytic core - and F(0) - the membrane proton channel. F(1) has five subunits: alpha(3), beta(3), gamma(1), delta(1), epsilon(1). F(0) has three main subunits: a(1), b(2) and c(10-14). The alpha and beta chains form an alternating ring which encloses part of the gamma chain. F(1) is attached to F(0) by a central stalk formed by the gamma and epsilon chains, while a peripheral stalk is formed by the delta and b chains.

The protein localises to the cell inner membrane. In terms of biological role, f(1)F(0) ATP synthase produces ATP from ADP in the presence of a proton or sodium gradient. F-type ATPases consist of two structural domains, F(1) containing the extramembraneous catalytic core and F(0) containing the membrane proton channel, linked together by a central stalk and a peripheral stalk. During catalysis, ATP synthesis in the catalytic domain of F(1) is coupled via a rotary mechanism of the central stalk subunits to proton translocation. Its function is as follows. This protein is part of the stalk that links CF(0) to CF(1). It either transmits conformational changes from CF(0) to CF(1) or is implicated in proton conduction. This is ATP synthase subunit delta from Rhizorhabdus wittichii (strain DSM 6014 / CCUG 31198 / JCM 15750 / NBRC 105917 / EY 4224 / RW1) (Sphingomonas wittichii).